Reading from the N-terminus, the 333-residue chain is MALPDYSMRQLLEAGVHFGHQSHRWNPKMSQYIFGVRNNIHIIDLSQTVPALHRALQAVSDTVAQGGRVLFVGTKRQAQDQVADAARRSAQYYVNSRWLGGMLTNWKTISNSIARLKKLEEMLSGPEQGGYTKKERLTLSREKEKLERALGGIRDMGGLPDLLFVIDTNKEDIAVKEAQRLGIPVAAILDTNSDPDGITYPVPGNDDAGRAIQLYCDLVARAAIDGIGRGHVDLGVDLGETEAPLSEGLPAEPSLWSTFEPLSGPRGVADDLKKLTGVSPEIEQKLNDLGVFHFSQIAGLDSVDAQRVGEEVGLPGRVDGWIAQAKEFSAEAE.

This sequence belongs to the universal ribosomal protein uS2 family.

In Azorhizobium caulinodans (strain ATCC 43989 / DSM 5975 / JCM 20966 / LMG 6465 / NBRC 14845 / NCIMB 13405 / ORS 571), this protein is Small ribosomal subunit protein uS2.